The sequence spans 203 residues: Protein-methionine-sulfoxide reductase heme-binding subunit MsrQ (203 aa).

5 consecutive transmembrane segments (helical) span residues 13–33, 79–99, 116–136, 147–167, and 169–189; these read IAIW…INLG, LLGL…SILE, PYLT…LTST, WQKL…HYLW, and VKTL…LLLL.

This sequence belongs to the MsrQ family. As to quaternary structure, heterodimer of a catalytic subunit (MsrP) and a heme-binding subunit (MsrQ). FMN serves as cofactor. It depends on heme b as a cofactor.

It localises to the cell inner membrane. Functionally, part of the MsrPQ system that repairs oxidized periplasmic proteins containing methionine sulfoxide residues (Met-O), using respiratory chain electrons. Thus protects these proteins from oxidative-stress damage caused by reactive species of oxygen and chlorine generated by the host defense mechanisms. MsrPQ is essential for the maintenance of envelope integrity under bleach stress, rescuing a wide series of structurally unrelated periplasmic proteins from methionine oxidation. MsrQ provides electrons for reduction to the reductase catalytic subunit MsrP, using the quinone pool of the respiratory chain. The sequence is that of Protein-methionine-sulfoxide reductase heme-binding subunit MsrQ from Yersinia pseudotuberculosis serotype O:1b (strain IP 31758).